Reading from the N-terminus, the 446-residue chain is tRNA modification GTPase MnmE (446 aa).

Arginine 22, glutamate 80, and arginine 119 together coordinate (6S)-5-formyl-5,6,7,8-tetrahydrofolate. A TrmE-type G domain is found at 215 to 370; the sequence is GFKVAIIGKP…LILALENIMN (156 aa). Residue asparagine 225 coordinates K(+). Residues 225–230, 244–250, and 269–272 contribute to the GTP site; these read NVGKSS, SDIAGTT, and DTAG. Serine 229 lines the Mg(2+) pocket. The K(+) site is built by serine 244, isoleucine 246, and threonine 249. Threonine 250 lines the Mg(2+) pocket. Residue lysine 446 participates in (6S)-5-formyl-5,6,7,8-tetrahydrofolate binding.

Belongs to the TRAFAC class TrmE-Era-EngA-EngB-Septin-like GTPase superfamily. TrmE GTPase family. As to quaternary structure, homodimer. Heterotetramer of two MnmE and two MnmG subunits. The cofactor is K(+).

The protein resides in the cytoplasm. Functionally, exhibits a very high intrinsic GTPase hydrolysis rate. Involved in the addition of a carboxymethylaminomethyl (cmnm) group at the wobble position (U34) of certain tRNAs, forming tRNA-cmnm(5)s(2)U34. This chain is tRNA modification GTPase MnmE, found in Sulfurimonas denitrificans (strain ATCC 33889 / DSM 1251) (Thiomicrospira denitrificans (strain ATCC 33889 / DSM 1251)).